Reading from the N-terminus, the 239-residue chain is Lipid transferase CIDEC (239 aa).

A required for liquid-liquid phase separation (LLPS) region spans residues Met-1–Pro-35. The region spanning Arg-41–Pro-118 is the CIDE-N domain. An RKKR polybasic motif motif is present at residues Arg-123–Arg-126.

It belongs to the CIDE family. Homodimer. Homooligomer; undergoes liquid-liquid phase separation (LLPS) via its N-terminus, facilitating lipid droplet fusion, occurs at the lipid droplet contact sites. Interacts with CIDEA. Interacts with PLIN1. Interacts with NFAT5; this interaction is direct and retains NFAT5 in the cytoplasm. Interacts with CEBPB. Interacts with isoform CLSTN3beta of CLSTN3; inhibiting the lipid transferase activity of CIDEC. Post-translationally, ubiquitinated and targeted to proteasomal degradation, resulting in a short half-life (about 15 minutes in 3T3-L1 cells). Protein stability depends on triaclyglycerol synthesis, fatty acid availability and lipid droplet formation. Expressed almost exclusively in adipose tissue, including subcutaneous and epididymal white adipose tissue (at protein level). Although abundantly present in brown adipose tissue at the mRNA level, the protein is almost undetectable in this tissue, or at moderate levels. Expressed in the mammary gland, in stromal adipose tissue, but becomes undetectable at the end of pregnancy and during lactation (at protein level). Expressed at low levels in skeletal muscle and heart.

Its subcellular location is the lipid droplet. It is found in the endoplasmic reticulum. The protein resides in the nucleus. The enzyme catalyses a triacyl-sn-glycerol(in) = a triacyl-sn-glycerol(out). Lipid transferase specifically expressed in white adipose tissue, which promotes unilocular lipid droplet formation by mediating lipid droplet fusion. Lipid droplet fusion promotes their enlargement, restricting lipolysis and favoring lipid storage. Localizes on the lipid droplet surface, at focal contact sites between lipid droplets, and mediates atypical lipid droplet fusion by undergoing liquid-liquid phase separation (LLPS) and promoting directional net neutral lipid transfer from the smaller to larger lipid droplets. The transfer direction may be driven by the internal pressure difference between the contacting lipid droplet pair. Its role in neutral lipid transfer and lipid droplet enlargement is activated by the interaction with PLIN1. May also act as a CEBPB coactivator in the white adipose tissue to control the expression of a subset of CEBPB downstream target genes, including SOCS1, SOCS3, TGFB1, TGFBR1, ID2 and XDH. When overexpressed in preadipocytes, induces apoptosis or increases cell susceptibility to apoptosis induced by serum deprivation or TGFB treatment. The sequence is that of Lipid transferase CIDEC from Mus musculus (Mouse).